Reading from the N-terminus, the 151-residue chain is Aspartate carbamoyltransferase regulatory chain (151 aa).

Positions 107, 112, 135, and 138 each coordinate Zn(2+).

This sequence belongs to the PyrI family. As to quaternary structure, contains catalytic and regulatory chains. Zn(2+) serves as cofactor.

Functionally, involved in allosteric regulation of aspartate carbamoyltransferase. The chain is Aspartate carbamoyltransferase regulatory chain from Psychromonas ingrahamii (strain DSM 17664 / CCUG 51855 / 37).